The primary structure comprises 369 residues: Glycerol-3-phosphate dehydrogenase [NAD(P)+] (369 aa).

5 residues coordinate NADPH: serine 6, tryptophan 7, arginine 27, arginine 28, and lysine 101. Positions 101 and 131 each coordinate sn-glycerol 3-phosphate. Residue alanine 135 participates in NADPH binding. Residues lysine 186, aspartate 239, serine 249, arginine 250, and asparagine 251 each coordinate sn-glycerol 3-phosphate. Residue lysine 186 is the Proton acceptor of the active site. Residue arginine 250 coordinates NADPH. Glutamate 276 provides a ligand contact to NADPH. The disordered stretch occupies residues 312 to 369 (KDIAPHLTTDDEPQGERTRGERTTDDGQGQGRTSVWGSLKRAFDQLRDGGGSSRRDRP). 2 stretches are compositionally biased toward basic and acidic residues: residues 325–336 (QGERTRGERTTD) and 352–369 (RAFD…RDRP).

It belongs to the NAD-dependent glycerol-3-phosphate dehydrogenase family.

Its subcellular location is the cytoplasm. The catalysed reaction is sn-glycerol 3-phosphate + NAD(+) = dihydroxyacetone phosphate + NADH + H(+). The enzyme catalyses sn-glycerol 3-phosphate + NADP(+) = dihydroxyacetone phosphate + NADPH + H(+). It functions in the pathway membrane lipid metabolism; glycerophospholipid metabolism. In terms of biological role, catalyzes the reduction of the glycolytic intermediate dihydroxyacetone phosphate (DHAP) to sn-glycerol 3-phosphate (G3P), the key precursor for phospholipid synthesis. In Leifsonia xyli subsp. xyli (strain CTCB07), this protein is Glycerol-3-phosphate dehydrogenase [NAD(P)+].